The following is a 199-amino-acid chain: Recombination protein RecR (199 aa).

The C4-type zinc finger occupies 57–72 (CQSCRTFTEETYCPIC). A Toprim domain is found at 81 to 176 (EVICVVETPA…TVSRIAHGVP (96 aa)).

This sequence belongs to the RecR family.

Functionally, may play a role in DNA repair. It seems to be involved in an RecBC-independent recombinational process of DNA repair. It may act with RecF and RecO. The chain is Recombination protein RecR from Shewanella pealeana (strain ATCC 700345 / ANG-SQ1).